Consider the following 350-residue polypeptide: MAGHEEEDERLISGRRREGEVDAALRPQSLADFVGQRQTRENLGVFVQAARARGEAMDHVLFHGPPGLGKTTLAQIVARELGVGFRGTSGPMIVKAGDLAAILTNLEPRDVLFIDEIHRLNPAIEEVLYPAMEDFQLDLIIGEGPAARSVRIDLPPFTLVGATTRSGLLTTPLRDRFGIPLRLDFYETDELVQIVTRGSRLLGMALTDEGAREVARRSRGTPRVAGRLLRRVRDFAAVAGRSPVDAFIADAALNRLEVDGRGLDAMDRRYLSRMADHYGGGPVGVDTLAAALAEERDTVEDVIEPYLIQQGFIKRTPRGRMLTAIAWTHLGLTPPAETPPVQPDLWSDAP.

Residues 1 to 186 form a large ATPase domain (RuvB-L) region; sequence MAGHEEEDER…FGIPLRLDFY (186 aa). ATP-binding positions include Leu-25, Arg-26, Gly-67, Lys-70, Thr-71, Thr-72, 133 to 135, Arg-176, Tyr-186, and Arg-223; that span reads EDF. Thr-71 contributes to the Mg(2+) binding site. The segment at 187–257 is small ATPAse domain (RuvB-S); sequence ETDELVQIVT…IADAALNRLE (71 aa). The head domain (RuvB-H) stretch occupies residues 260-350; it reads GRGLDAMDRR…VQPDLWSDAP (91 aa). The DNA site is built by Arg-296, Arg-315, and Arg-320.

It belongs to the RuvB family. Homohexamer. Forms an RuvA(8)-RuvB(12)-Holliday junction (HJ) complex. HJ DNA is sandwiched between 2 RuvA tetramers; dsDNA enters through RuvA and exits via RuvB. An RuvB hexamer assembles on each DNA strand where it exits the tetramer. Each RuvB hexamer is contacted by two RuvA subunits (via domain III) on 2 adjacent RuvB subunits; this complex drives branch migration. In the full resolvosome a probable DNA-RuvA(4)-RuvB(12)-RuvC(2) complex forms which resolves the HJ.

It is found in the cytoplasm. It catalyses the reaction ATP + H2O = ADP + phosphate + H(+). Its function is as follows. The RuvA-RuvB-RuvC complex processes Holliday junction (HJ) DNA during genetic recombination and DNA repair, while the RuvA-RuvB complex plays an important role in the rescue of blocked DNA replication forks via replication fork reversal (RFR). RuvA specifically binds to HJ cruciform DNA, conferring on it an open structure. The RuvB hexamer acts as an ATP-dependent pump, pulling dsDNA into and through the RuvAB complex. RuvB forms 2 homohexamers on either side of HJ DNA bound by 1 or 2 RuvA tetramers; 4 subunits per hexamer contact DNA at a time. Coordinated motions by a converter formed by DNA-disengaged RuvB subunits stimulates ATP hydrolysis and nucleotide exchange. Immobilization of the converter enables RuvB to convert the ATP-contained energy into a lever motion, pulling 2 nucleotides of DNA out of the RuvA tetramer per ATP hydrolyzed, thus driving DNA branch migration. The RuvB motors rotate together with the DNA substrate, which together with the progressing nucleotide cycle form the mechanistic basis for DNA recombination by continuous HJ branch migration. Branch migration allows RuvC to scan DNA until it finds its consensus sequence, where it cleaves and resolves cruciform DNA. The protein is Holliday junction branch migration complex subunit RuvB of Rhodospirillum rubrum (strain ATCC 11170 / ATH 1.1.1 / DSM 467 / LMG 4362 / NCIMB 8255 / S1).